The chain runs to 65 residues: Large ribosomal subunit protein bL35 (65 aa).

A disordered region spans residues 1–28; the sequence is MPKLKTRKAAARRFKATGSGKIKRRKAF.

It belongs to the bacterial ribosomal protein bL35 family.

The polypeptide is Large ribosomal subunit protein bL35 (Trichodesmium erythraeum (strain IMS101)).